Consider the following 242-residue polypeptide: MIKAIVLDIEGTTCPVTFVSQTLFPFARRQLSKTICSENRPSNVTAAIEEAIAEWKNDPESKSQALLLRASNQNQPTSEDIIHYFDHLIQNDRKSTALKELQGIIWEQGYAAGELQSPLYGDVVPALNAWTQQGITLAVYSSGSVKAQQLLYAHTTDGDITNRFSQWFDTRTGPKLNADSYRIISQSIGLKPASILFVSDHPRECDAAAEAGMETRFCLREGNPFSDGGDHQMIHNLGEIKL.

This sequence belongs to the HAD-like hydrolase superfamily. MasA/MtnC family. Monomer. The cofactor is Mg(2+).

It carries out the reaction 5-methylsulfanyl-2,3-dioxopentyl phosphate + H2O = 1,2-dihydroxy-5-(methylsulfanyl)pent-1-en-3-one + phosphate. It participates in amino-acid biosynthesis; L-methionine biosynthesis via salvage pathway; L-methionine from S-methyl-5-thio-alpha-D-ribose 1-phosphate: step 3/6. The protein operates within amino-acid biosynthesis; L-methionine biosynthesis via salvage pathway; L-methionine from S-methyl-5-thio-alpha-D-ribose 1-phosphate: step 4/6. In terms of biological role, bifunctional enzyme that catalyzes the enolization of 2,3-diketo-5-methylthiopentyl-1-phosphate (DK-MTP-1-P) into the intermediate 2-hydroxy-3-keto-5-methylthiopentenyl-1-phosphate (HK-MTPenyl-1-P), which is then dephosphorylated to form the acireductone 1,2-dihydroxy-3-keto-5-methylthiopentene (DHK-MTPene). This is Enolase-phosphatase E1 from Synechococcus sp. (strain WH7803).